The sequence spans 474 residues: ATP synthase subunit beta (474 aa).

152–159 provides a ligand contact to ATP; the sequence is GGAGVGKT.

This sequence belongs to the ATPase alpha/beta chains family. As to quaternary structure, F-type ATPases have 2 components, CF(1) - the catalytic core - and CF(0) - the membrane proton channel. CF(1) has five subunits: alpha(3), beta(3), gamma(1), delta(1), epsilon(1). CF(0) has four main subunits: a(1), b(1), b'(1) and c(9-12).

It is found in the cell inner membrane. It catalyses the reaction ATP + H2O + 4 H(+)(in) = ADP + phosphate + 5 H(+)(out). In terms of biological role, produces ATP from ADP in the presence of a proton gradient across the membrane. The catalytic sites are hosted primarily by the beta subunits. This Rhodospirillum rubrum (strain ATCC 11170 / ATH 1.1.1 / DSM 467 / LMG 4362 / NCIMB 8255 / S1) protein is ATP synthase subunit beta.